Consider the following 447-residue polypeptide: Keratin, type I cytoskeletal 15 (447 aa).

The segment at 1–93 is head; it reads MATTFLQTSS…GGDGGLLSGN (93 aa). Phosphoserine occurs at positions 16, 28, 33, and 47. Residues 94-129 form a coil 1A region; it reads EKVTMQNLNDRLASYLDKVRALEEANTELEVKIRDW. An IF rod domain is found at 94 to 406; the sequence is EKVTMQNLND…NLLEGQDAKM (313 aa). Threonine 120 is modified (phosphothreonine). Residues 130–148 form a linker 1 region; sequence YQKQSPASPDRDYSHYFKT. Residues 149 to 240 are coil 1B; it reads MEEIRDKILA…KNHEEEMKEF (92 aa). Residues 241 to 260 form a linker 12 region; sequence SSQLAGQVNVEMDAAPGVDL. The segment at 261–402 is coil 2; that stretch reads TRMLAEMREQ…STYRNLLEGQ (142 aa). A Glycyl lysine isopeptide (Lys-Gly) (interchain with G-Cter in SUMO2) cross-link involves residue lysine 289. Phosphothreonine is present on residues threonine 290 and threonine 312. Residues 403–447 are tail; it reads DAKMAAIGVREASLRGGSSGGGSNFHISVEESVDGKVVSSRKRES. A Glycyl lysine isopeptide (Lys-Gly) (interchain with G-Cter in SUMO1); alternate cross-link involves residue lysine 438. Residue lysine 438 forms a Glycyl lysine isopeptide (Lys-Gly) (interchain with G-Cter in SUMO2); alternate linkage.

This sequence belongs to the intermediate filament family. Heterotetramer of two type I and two type II keratins. Forms a heterodimer with KRT14. Interacts with NOD2.

This chain is Keratin, type I cytoskeletal 15, found in Rattus norvegicus (Rat).